Consider the following 686-residue polypeptide: Glycogenin (686 aa).

4 residues coordinate UDP: L13, N16, Y19, and R82. UDP-alpha-D-glucose-binding residues include L13, N16, Y19, R82, K91, D107, A108, D109, N139, T140, D166, D169, and Q170. Residues D107, A108, and D109 each contribute to the UDP site. Mn(2+) is bound at residue D107. D109 contacts Mn(2+). Y196 and Y198 each carry an O-linked (Glc...) tyrosine glycan. Residues H213, G216, and K219 each coordinate UDP. Residue H213 participates in Mn(2+) binding. G216 and K219 together coordinate UDP-alpha-D-glucose. 4 disordered regions span residues 264–331 (VKGE…ANFP), 381–444 (PEPT…RGNA), 460–533 (KHRR…GVPA), and 603–686 (KPLR…VLET). Low complexity-rich tracts occupy residues 285–308 (SSQS…YTSH) and 398–416 (SAAS…ASPT). Residues 307–686 (SHGASWDASR…TEEERDVLET (380 aa)) are not required for catalytic activity. Polar residues-rich tracts occupy residues 424-442 (VTPT…TTRG) and 471-483 (AATS…GRAQ). Residues 677–686 (TEEERDVLET) show a composition bias toward acidic residues.

The protein belongs to the glycosyltransferase 8 family. Glycogenin subfamily. In terms of assembly, interacts with glycogen synthase gsy-1; the interaction is direct. Mn(2+) is required as a cofactor.

It is found in the cytoplasm. The protein localises to the vacuole. It catalyses the reaction L-tyrosyl-[glycogenin] + UDP-alpha-D-glucose = alpha-D-glucosyl-L-tyrosyl-[glycogenin] + UDP + H(+). The catalysed reaction is [1,4-alpha-D-glucosyl](n)-L-tyrosyl-[glycogenin] + UDP-alpha-D-glucose = [1,4-alpha-D-glucosyl](n+1)-L-tyrosyl-[glycogenin] + UDP + H(+). In terms of biological role, self-glucosylating initiator of glycogen synthesis. It catalyzes the formation of a short alpha (1,4)-glucosyl chain covalently attached via a glucose 1-O-tyrosyl linkage to internal tyrosine residues and these chains act as primers for the elongation reaction catalyzed by glycogen synthase. This chain is Glycogenin, found in Neurospora crassa (strain ATCC 24698 / 74-OR23-1A / CBS 708.71 / DSM 1257 / FGSC 987).